A 392-amino-acid polypeptide reads, in one-letter code: Lipid-A-disaccharide synthase (392 aa).

It belongs to the LpxB family.

It catalyses the reaction a lipid X + a UDP-2-N,3-O-bis[(3R)-3-hydroxyacyl]-alpha-D-glucosamine = a lipid A disaccharide + UDP + H(+). Its pathway is bacterial outer membrane biogenesis; LPS lipid A biosynthesis. Condensation of UDP-2,3-diacylglucosamine and 2,3-diacylglucosamine-1-phosphate to form lipid A disaccharide, a precursor of lipid A, a phosphorylated glycolipid that anchors the lipopolysaccharide to the outer membrane of the cell. This Bradyrhizobium diazoefficiens (strain JCM 10833 / BCRC 13528 / IAM 13628 / NBRC 14792 / USDA 110) protein is Lipid-A-disaccharide synthase.